Reading from the N-terminus, the 33-residue chain is Mu/omega-theraphotoxin-Tap2a (33 aa).

3 disulfides stabilise this stretch: Cys-2–Cys-17, Cys-9–Cys-22, and Cys-16–Cys-29.

This sequence belongs to the neurotoxin 10 (Hwtx-1) family. 59 (Tltx) subfamily. In terms of tissue distribution, expressed by the venom gland.

Its subcellular location is the secreted. In terms of biological role, gating-modifier toxin that inhibits both sodium (Nav) and calcium (Cav3) channels by inducing hyperpolarizing shift in voltage-dependence of activation and steady state inactivation. Inhibits Nav1.1/SCN1A, Nav1.2/SCN2A, Nav1.6/SCN6A, Nav1.7/SCN9A and Cav3.1/CACNA1G sodium and calcium channels at nanomolar concentrations (IC(50)=169-621 nM). Surprisingly, selectively slows fast inactivation of Nav1.3/SCN3A. Also shows moderate inhibition of Nav1.3/SCN3A sodium channels (IC(50)=1216 nM). The protein is Mu/omega-theraphotoxin-Tap2a of Theraphosa apophysis (Goliath pinkfoot tarantula).